We begin with the raw amino-acid sequence, 636 residues long: DNA gyrase subunit B (636 aa).

Positions 421–535 (TELFIVEGDS…QGRVYIALPP (115 aa)) constitute a Toprim domain. Mg(2+)-binding residues include Glu427, Asp500, and Asp502.

This sequence belongs to the type II topoisomerase GyrB family. As to quaternary structure, heterotetramer, composed of two GyrA and two GyrB chains. In the heterotetramer, GyrA contains the active site tyrosine that forms a transient covalent intermediate with DNA, while GyrB binds cofactors and catalyzes ATP hydrolysis. Requires Mg(2+) as cofactor. It depends on Mn(2+) as a cofactor. Ca(2+) serves as cofactor.

Its subcellular location is the cytoplasm. The enzyme catalyses ATP-dependent breakage, passage and rejoining of double-stranded DNA.. A type II topoisomerase that negatively supercoils closed circular double-stranded (ds) DNA in an ATP-dependent manner to modulate DNA topology and maintain chromosomes in an underwound state. Negative supercoiling favors strand separation, and DNA replication, transcription, recombination and repair, all of which involve strand separation. Also able to catalyze the interconversion of other topological isomers of dsDNA rings, including catenanes and knotted rings. Type II topoisomerases break and join 2 DNA strands simultaneously in an ATP-dependent manner. The chain is DNA gyrase subunit B from Thermotoga maritima (strain ATCC 43589 / DSM 3109 / JCM 10099 / NBRC 100826 / MSB8).